A 243-amino-acid polypeptide reads, in one-letter code: Biosynthetic peptidoglycan transglycosylase (243 aa).

A helical membrane pass occupies residues L21 to D43.

It belongs to the glycosyltransferase 51 family.

It is found in the cell inner membrane. It carries out the reaction [GlcNAc-(1-&gt;4)-Mur2Ac(oyl-L-Ala-gamma-D-Glu-L-Lys-D-Ala-D-Ala)](n)-di-trans,octa-cis-undecaprenyl diphosphate + beta-D-GlcNAc-(1-&gt;4)-Mur2Ac(oyl-L-Ala-gamma-D-Glu-L-Lys-D-Ala-D-Ala)-di-trans,octa-cis-undecaprenyl diphosphate = [GlcNAc-(1-&gt;4)-Mur2Ac(oyl-L-Ala-gamma-D-Glu-L-Lys-D-Ala-D-Ala)](n+1)-di-trans,octa-cis-undecaprenyl diphosphate + di-trans,octa-cis-undecaprenyl diphosphate + H(+). Its pathway is cell wall biogenesis; peptidoglycan biosynthesis. Its function is as follows. Peptidoglycan polymerase that catalyzes glycan chain elongation from lipid-linked precursors. In Xylella fastidiosa (strain Temecula1 / ATCC 700964), this protein is Biosynthetic peptidoglycan transglycosylase.